A 500-amino-acid chain; its full sequence is Glycerol kinase (500 aa).

Thr13 is a binding site for ADP. The ATP site is built by Thr13, Thr14, and Ser15. Thr13 lines the sn-glycerol 3-phosphate pocket. Residue Arg17 coordinates ADP. Arg83, Glu84, Tyr136, and Asp246 together coordinate sn-glycerol 3-phosphate. Positions 83, 84, 136, 246, and 247 each coordinate glycerol. Positions 268 and 311 each coordinate ADP. ATP is bound by residues Thr268, Gly311, Gln315, and Gly412. Gly412 and Asn416 together coordinate ADP.

The protein belongs to the FGGY kinase family.

It catalyses the reaction glycerol + ATP = sn-glycerol 3-phosphate + ADP + H(+). Its pathway is polyol metabolism; glycerol degradation via glycerol kinase pathway; sn-glycerol 3-phosphate from glycerol: step 1/1. Its activity is regulated as follows. Inhibited by fructose 1,6-bisphosphate (FBP). Functionally, key enzyme in the regulation of glycerol uptake and metabolism. Catalyzes the phosphorylation of glycerol to yield sn-glycerol 3-phosphate. This chain is Glycerol kinase, found in Francisella tularensis subsp. novicida (strain U112).